Reading from the N-terminus, the 20-residue chain is Major extrapallial fluid protein (20 aa).

The interval 1–20 is disordered; it reads NPVDDHHDDHHDAPIVEHHD.

In terms of assembly, homodimer. Glycosylated.

Its function is as follows. Appears to be a building block of the soluble organic matrix of the shell. The protein binds calcium. The chain is Major extrapallial fluid protein from Mytilus edulis (Blue mussel).